A 266-amino-acid polypeptide reads, in one-letter code: MKIGKFVIDGNAAIMGILNVTPDSFSDGGSYTTVQKVLQQVDQLIAGGAKIIDVGGESTRPGYQFVSAADEIERVVPMIKAIKAKYDVLISIDTYKTETARAALEAGADILNDVRAGLYDGEMLALAAEYDVPIILMHNQKEEVYQDVTQDVCDFLSARAQAAIDAGVPKDNIWIDPGFGFPKSVQHNMELLKGLDHVCQLGYPVLFGISRKGVVDALLGGNTKAKERDGATAALSAYALGKGCQLVRVHDVKANQEIVAVLSQLM.

Positions 12–260 (AAIMGILNVT…DVKANQEIVA (249 aa)) constitute a Pterin-binding domain. Asparagine 19 contributes to the Mg(2+) binding site. Residues threonine 59, aspartate 93, asparagine 112, aspartate 176, lysine 212, and 248 to 250 (RVH) each bind (7,8-dihydropterin-6-yl)methyl diphosphate.

The protein belongs to the DHPS family. As to quaternary structure, homodimer or homotrimer. Mg(2+) is required as a cofactor.

The catalysed reaction is (7,8-dihydropterin-6-yl)methyl diphosphate + 4-aminobenzoate = 7,8-dihydropteroate + diphosphate. It participates in cofactor biosynthesis; tetrahydrofolate biosynthesis; 7,8-dihydrofolate from 2-amino-4-hydroxy-6-hydroxymethyl-7,8-dihydropteridine diphosphate and 4-aminobenzoate: step 1/2. In terms of biological role, catalyzes the condensation of para-aminobenzoate (pABA) with 6-hydroxymethyl-7,8-dihydropterin diphosphate (DHPt-PP) to form 7,8-dihydropteroate (H2Pte), the immediate precursor of folate derivatives. The protein is Dihydropteroate synthase (folP) of Streptococcus pyogenes.